We begin with the raw amino-acid sequence, 422 residues long: 5-hydroxytryptamine receptor 1A (422 aa).

Residues 1 to 23 form a disordered region; that stretch reads MDVLSPGQGNNTTSPPAPFETGG. Topologically, residues 1-38 are extracellular; sequence MDVLSPGQGNNTTSPPAPFETGGNTTGISDVTFSYQVI. 3 N-linked (GlcNAc...) asparagine glycosylation sites follow: Asn-10, Asn-11, and Asn-24. A helical transmembrane segment spans residues 39-59; the sequence is TSLLLGTLIFCAVLGNACVVA. Over 60-73 the chain is Cytoplasmic; that stretch reads AIALERSLQNVANY. A helical transmembrane segment spans residues 74–98; that stretch reads LIGSLAVTDLMVSVLVLPMAALYQV. The Extracellular portion of the chain corresponds to 99–107; the sequence is LNKWTLGQV. A helical transmembrane segment spans residues 108–132; that stretch reads TCDLFIALDVLCCTSSILHLCAIAL. Cys-109 and Cys-187 are disulfide-bonded. Positions 116 and 120 each coordinate serotonin. Residues 133-135 carry the DRY motif; important for ligand-induced conformation changes motif; that stretch reads DRY. The Cytoplasmic segment spans residues 133–152; the sequence is DRYWAITDPIDYVNKRTPRR. Residues 153-174 traverse the membrane as a helical segment; the sequence is AAALISLTWLIGFLISIPPMLG. At 175-193 the chain is on the extracellular side; that stretch reads WRTPEDRSDPDACTISKDH. A helical membrane pass occupies residues 194–216; the sequence is GYTIYSTFGAFYIPLLLMLVLYG. Residues 217–346 lie on the Cytoplasmic side of the membrane; that stretch reads RIFRAARFRI…LARERKTVKT (130 aa). The tract at residues 235-262 is disordered; it reads KTGADTRHGASPAPQPKKSVNGESGSRN. Positions 314, 345, 346, and 352 each coordinate 1D-myo-inositol 4-phosphate. A helical transmembrane segment spans residues 347–370; the sequence is LGIIMGTFILCWLPFFIVALVLPF. At 371-378 the chain is on the extracellular side; it reads CESSCHMP. A helical transmembrane segment spans residues 379–403; sequence TLLGAIINWLGYSNSLLNPVIYAYF. Residues 396-400 carry the NPxxY motif; important for ligand-induced conformation changes and signaling motif; sequence NPVIY. The 1D-myo-inositol 4-phosphate site is built by Phe-403, Asn-404, and Lys-405. The Cytoplasmic segment spans residues 404 to 422; that stretch reads NKDFQNAFKKIIKCKFCRQ.

Belongs to the G-protein coupled receptor 1 family. 5-hydroxytryptamine receptor subfamily. HTR1A sub-subfamily. As to quaternary structure, heterodimer; heterodimerizes with GPER1. Interacts with YIF1B. Interacts with GPR39 and GALR1.

The protein resides in the cell membrane. The protein localises to the cell projection. It localises to the dendrite. G-protein coupled receptor activity is regulated by lipids: phosphatidylinositol 4-phosphate increases HTR1A-mediated activity. Functionally, G-protein coupled receptor for 5-hydroxytryptamine (serotonin). Also functions as a receptor for various drugs and psychoactive substances. Ligand binding causes a conformation change that triggers signaling via guanine nucleotide-binding proteins (G proteins) and modulates the activity of downstream effectors, such as adenylate cyclase. HTR1A is coupled to G(i)/G(o) G alpha proteins and mediates inhibitory neurotransmission: signaling inhibits adenylate cyclase activity and activates a phosphatidylinositol-calcium second messenger system that regulates the release of Ca(2+) ions from intracellular stores. Beta-arrestin family members regulate signaling by mediating both receptor desensitization and resensitization processes. In Gorilla gorilla gorilla (Western lowland gorilla), this protein is 5-hydroxytryptamine receptor 1A (HTR1A).